Consider the following 346-residue polypeptide: uncharacterized protein (346 aa).

It belongs to the IIV-6 359L family.

This is an uncharacterized protein from Invertebrate iridescent virus 6 (IIV-6).